Reading from the N-terminus, the 225-residue chain is Large ribosomal subunit protein bL25 (225 aa).

Positions 206–225 are disordered; the sequence is EDSKNKITKDNETNKDKSNL.

The protein belongs to the bacterial ribosomal protein bL25 family. CTC subfamily. In terms of assembly, part of the 50S ribosomal subunit; part of the 5S rRNA/L5/L18/L25 subcomplex. Contacts the 5S rRNA. Binds to the 5S rRNA independently of L5 and L18.

In terms of biological role, this is one of the proteins that binds to the 5S RNA in the ribosome where it forms part of the central protuberance. In Vesicomyosocius okutanii subsp. Calyptogena okutanii (strain HA), this protein is Large ribosomal subunit protein bL25.